The sequence spans 569 residues: Urease subunit alpha (569 aa).

In terms of domain architecture, Urease spans 131–569 (GGMDAHIHFI…LPMAQRYFLF (439 aa)). 3 residues coordinate Ni(2+): His-136, His-138, and Lys-218. Lys-218 bears the N6-carboxylysine mark. Position 220 (His-220) interacts with substrate. Positions 247 and 273 each coordinate Ni(2+). The Proton donor role is filled by His-321. Asp-361 is a Ni(2+) binding site.

This sequence belongs to the metallo-dependent hydrolases superfamily. Urease alpha subunit family. As to quaternary structure, heterotrimer of UreA (gamma), UreB (beta) and UreC (alpha) subunits. Three heterotrimers associate to form the active enzyme. Ni cation is required as a cofactor. Post-translationally, carboxylation allows a single lysine to coordinate two nickel ions.

The protein localises to the cytoplasm. The enzyme catalyses urea + 2 H2O + H(+) = hydrogencarbonate + 2 NH4(+). Its pathway is nitrogen metabolism; urea degradation; CO(2) and NH(3) from urea (urease route): step 1/1. The sequence is that of Urease subunit alpha from Rhizobium rhizogenes (strain K84 / ATCC BAA-868) (Agrobacterium radiobacter).